The primary structure comprises 388 residues: Succinate--CoA ligase [ADP-forming] subunit beta (388 aa).

The ATP-grasp domain occupies 9–244 (KQLFARYGLP…PSQEDSREAH (236 aa)). ATP is bound by residues Lys-46, 53-55 (GRG), Glu-99, Thr-102, and Glu-107. Residues Asn-199 and Asp-213 each coordinate Mg(2+). Substrate contacts are provided by residues Asn-264 and 321–323 (GIV).

This sequence belongs to the succinate/malate CoA ligase beta subunit family. As to quaternary structure, heterotetramer of two alpha and two beta subunits. Mg(2+) is required as a cofactor.

It catalyses the reaction succinate + ATP + CoA = succinyl-CoA + ADP + phosphate. The catalysed reaction is GTP + succinate + CoA = succinyl-CoA + GDP + phosphate. The protein operates within carbohydrate metabolism; tricarboxylic acid cycle; succinate from succinyl-CoA (ligase route): step 1/1. Succinyl-CoA synthetase functions in the citric acid cycle (TCA), coupling the hydrolysis of succinyl-CoA to the synthesis of either ATP or GTP and thus represents the only step of substrate-level phosphorylation in the TCA. The beta subunit provides nucleotide specificity of the enzyme and binds the substrate succinate, while the binding sites for coenzyme A and phosphate are found in the alpha subunit. The sequence is that of Succinate--CoA ligase [ADP-forming] subunit beta from Pectobacterium atrosepticum (strain SCRI 1043 / ATCC BAA-672) (Erwinia carotovora subsp. atroseptica).